The following is a 124-amino-acid chain: Fluoride-specific ion channel FluC (124 aa).

Transmembrane regions (helical) follow at residues V4–W24, A32–M52, G68–F88, and L96–L116. G75 and T78 together coordinate Na(+).

The protein belongs to the fluoride channel Fluc/FEX (TC 1.A.43) family.

The protein localises to the cell inner membrane. It carries out the reaction fluoride(in) = fluoride(out). Its activity is regulated as follows. Na(+) is not transported, but it plays an essential structural role and its presence is essential for fluoride channel function. Its function is as follows. Fluoride-specific ion channel. Important for reducing fluoride concentration in the cell, thus reducing its toxicity. This is Fluoride-specific ion channel FluC from Geotalea daltonii (strain DSM 22248 / JCM 15807 / FRC-32) (Geobacter daltonii).